A 330-amino-acid polypeptide reads, in one-letter code: tRNA U34 carboxymethyltransferase (330 aa).

Residues Lys-91, Trp-105, Lys-110, Gly-130, 152–154 (DPS), 181–182 (IE), Met-196, Tyr-200, and Arg-315 contribute to the carboxy-S-adenosyl-L-methionine site.

Belongs to the class I-like SAM-binding methyltransferase superfamily. CmoB family. Homotetramer.

It catalyses the reaction carboxy-S-adenosyl-L-methionine + 5-hydroxyuridine(34) in tRNA = 5-carboxymethoxyuridine(34) in tRNA + S-adenosyl-L-homocysteine + H(+). In terms of biological role, catalyzes carboxymethyl transfer from carboxy-S-adenosyl-L-methionine (Cx-SAM) to 5-hydroxyuridine (ho5U) to form 5-carboxymethoxyuridine (cmo5U) at position 34 in tRNAs. In Shewanella frigidimarina (strain NCIMB 400), this protein is tRNA U34 carboxymethyltransferase.